The sequence spans 213 residues: Pyrrolidone-carboxylate peptidase (213 aa).

Residues Glu80, Cys143, and His165 contribute to the active site.

Belongs to the peptidase C15 family. As to quaternary structure, homotetramer.

It localises to the cytoplasm. It catalyses the reaction Release of an N-terminal pyroglutamyl group from a polypeptide, the second amino acid generally not being Pro.. Removes 5-oxoproline from various penultimate amino acid residues except L-proline. The chain is Pyrrolidone-carboxylate peptidase from Erwinia tasmaniensis (strain DSM 17950 / CFBP 7177 / CIP 109463 / NCPPB 4357 / Et1/99).